The chain runs to 220 residues: Ribosome maturation factor RimM (220 aa).

Residues 143–220 enclose the PRC barrel domain; that stretch reads EGEFYWVDLI…RIVVDWGLDY (78 aa).

This sequence belongs to the RimM family. As to quaternary structure, binds ribosomal protein uS19.

It localises to the cytoplasm. In terms of biological role, an accessory protein needed during the final step in the assembly of 30S ribosomal subunit, possibly for assembly of the head region. Essential for efficient processing of 16S rRNA. May be needed both before and after RbfA during the maturation of 16S rRNA. It has affinity for free ribosomal 30S subunits but not for 70S ribosomes. The protein is Ribosome maturation factor RimM of Cupriavidus metallidurans (strain ATCC 43123 / DSM 2839 / NBRC 102507 / CH34) (Ralstonia metallidurans).